The primary structure comprises 154 residues: Superoxide dismutase [Cu-Zn] (154 aa).

3 residues coordinate Cu cation: histidine 47, histidine 49, and histidine 64. A disulfide bond links cysteine 58 and cysteine 147. The Zn(2+) site is built by histidine 64, histidine 72, histidine 81, and aspartate 84. Histidine 121 provides a ligand contact to Cu cation. Arginine 144 serves as a coordination point for substrate.

Belongs to the Cu-Zn superoxide dismutase family. In terms of assembly, homodimer. Cu cation is required as a cofactor. It depends on Zn(2+) as a cofactor.

The protein localises to the cytoplasm. The enzyme catalyses 2 superoxide + 2 H(+) = H2O2 + O2. Destroys radicals which are normally produced within the cells and which are toxic to biological systems. The polypeptide is Superoxide dismutase [Cu-Zn] (SOD1) (Podospora anserina (Pleurage anserina)).